The chain runs to 369 residues: Anthranilate phosphoribosyltransferase (369 aa).

5-phospho-alpha-D-ribose 1-diphosphate is bound by residues G99, 102–103 (GD), 109–112 (NVST), 127–135 (KHGNRGVSS), and S139. G99 serves as a coordination point for anthranilate. S111 is a Mg(2+) binding site. N130 serves as a coordination point for anthranilate. Position 185 (R185) interacts with anthranilate. Mg(2+) contacts are provided by D244 and E245.

The protein belongs to the anthranilate phosphoribosyltransferase family. As to quaternary structure, homodimer. Mg(2+) serves as cofactor.

It catalyses the reaction N-(5-phospho-beta-D-ribosyl)anthranilate + diphosphate = 5-phospho-alpha-D-ribose 1-diphosphate + anthranilate. It functions in the pathway amino-acid biosynthesis; L-tryptophan biosynthesis; L-tryptophan from chorismate: step 2/5. Functionally, catalyzes the transfer of the phosphoribosyl group of 5-phosphorylribose-1-pyrophosphate (PRPP) to anthranilate to yield N-(5'-phosphoribosyl)-anthranilate (PRA). The sequence is that of Anthranilate phosphoribosyltransferase from Psychrobacter sp. (strain PRwf-1).